Consider the following 143-residue polypeptide: MSLSDKDKAAVKALWSKIAKSADVIGNDAVSRMIVVYPQTKTYFAHWPDLTPGSTNIKAHGKKVMGGIALAVSKIDDLKAGLSDLSEQHAFKLRVDPANFKILNHCIMVVISSMFPKDFTPEAHISLDKFLSAVALALAEKYR.

Ser2 carries the post-translational modification N-acetylserine. The Globin domain occupies 2–143; sequence SLSDKDKAAV…VALALAEKYR (142 aa). His60 is an O2 binding site. His89 contributes to the heme b binding site.

It belongs to the globin family. In terms of assembly, heterotetramer of two alpha chains and two beta chains. Red blood cells.

Its function is as follows. Involved in oxygen transport from the lung to the various peripheral tissues. This chain is Hemoglobin subunit alpha (hba), found in Artedidraco orianae (Barbeled plunderfish).